The following is a 337-amino-acid chain: MATASPAADGGRGRPWEGGLVSWPPAPPLTIPWTWMGPSWGQHPGHWGFPALTEPSASPAASLGIFEVRRVLDASGCSMLAPLQTGAARFSSYLLSRARKVLGSHLFSPCGVPEFCSISTRKLAAHSFGASMAAMMSFPPQRYHYFLVLDFEATCDKPQIHPQEIIEFPILKLNGRTMEIESTFHMYVQPVVHPQLTPFCTELTGIIQAMVDGQPSLQQVLERVDEWMAKEGLLDPNVKSIFVTCGDWDLKVMLPGQCQYLGLPVADYFKQWINLKKAYSFAMGCWPKNGLLDMNKGLSLQHIGRPHSGIDDCKNIANIMKTLAYRGFIFKQTSKPF.

The 175-residue stretch at 146–320 (FLVLDFEATC…DDCKNIANIM (175 aa)) folds into the Exonuclease domain. The Mg(2+) site is built by aspartate 150, glutamate 152, and aspartate 249. The active-site Proton acceptor is glutamate 152. Glutamate 152 is an AMP binding site. Histidine 307 (proton acceptor) is an active-site residue. An AMP-binding site is contributed by histidine 307. Aspartate 312 is a Mg(2+) binding site.

Interacts with PRNP. Mg(2+) is required as a cofactor.

In Bos taurus (Bovine), this protein is ERI1 exoribonuclease 3 (ERI3).